Consider the following 429-residue polypeptide: Phosphoribosylamine--glycine ligase (429 aa).

In terms of domain architecture, ATP-grasp spans 109–316 (KDFLARHQIP…LVELCLAAID (208 aa)). 135–196 (VREQGAPIVV…EEFLDGEEAS (62 aa)) is a binding site for ATP. Residues 212 to 234 (SQDHKRVGDKDTGPNTGGMGAYS) are disordered. The segment covering 213–223 (QDHKRVGDKDT) has biased composition (basic and acidic residues). Mg(2+) contacts are provided by Glu-286 and Asn-288.

It belongs to the GARS family. Mg(2+) serves as cofactor. Mn(2+) is required as a cofactor.

It catalyses the reaction 5-phospho-beta-D-ribosylamine + glycine + ATP = N(1)-(5-phospho-beta-D-ribosyl)glycinamide + ADP + phosphate + H(+). It participates in purine metabolism; IMP biosynthesis via de novo pathway; N(1)-(5-phospho-D-ribosyl)glycinamide from 5-phospho-alpha-D-ribose 1-diphosphate: step 2/2. The polypeptide is Phosphoribosylamine--glycine ligase (Vibrio vulnificus (strain CMCP6)).